Consider the following 554-residue polypeptide: 3-(3-hydroxy-phenyl)propionate/3-hydroxycinnamic acid hydroxylase (554 aa).

FAD contacts are provided by residues 17 to 46 and 285 to 295; these read QVAIAGAGPVGLMMANYLGQMGIDVLVVEK and FRIDRVLLAGD.

Belongs to the PheA/TfdB FAD monooxygenase family. FAD serves as cofactor.

The enzyme catalyses 3-(3-hydroxyphenyl)propanoate + NADH + O2 + H(+) = 3-(2,3-dihydroxyphenyl)propanoate + NAD(+) + H2O. It catalyses the reaction (2E)-3-(3-hydroxyphenyl)prop-2-enoate + NADH + O2 + H(+) = (2E)-3-(2,3-dihydroxyphenyl)prop-2-enoate + NAD(+) + H2O. It participates in aromatic compound metabolism; 3-phenylpropanoate degradation. In terms of biological role, catalyzes the insertion of one atom of molecular oxygen into position 2 of the phenyl ring of 3-(3-hydroxyphenyl)propionate (3-HPP) and hydroxycinnamic acid (3HCI). The sequence is that of 3-(3-hydroxy-phenyl)propionate/3-hydroxycinnamic acid hydroxylase from Escherichia coli (strain K12 / DH10B).